A 418-amino-acid chain; its full sequence is Tyrosine--tRNA ligase 1 (418 aa).

Tyrosine 34 lines the L-tyrosine pocket. The short motif at 39 to 48 (PTADSLHIGH) is the 'HIGH' region element. The L-tyrosine site is built by tyrosine 169 and glutamine 173. The 'KMSKS' region motif lies at 230–234 (KFGKT). ATP is bound at residue lysine 233. The S4 RNA-binding domain maps to 352–418 (TVLIDLLVES…GKKKYFLIRY (67 aa)).

Belongs to the class-I aminoacyl-tRNA synthetase family. TyrS type 1 subfamily. As to quaternary structure, homodimer.

It localises to the cytoplasm. It carries out the reaction tRNA(Tyr) + L-tyrosine + ATP = L-tyrosyl-tRNA(Tyr) + AMP + diphosphate + H(+). Functionally, catalyzes the attachment of tyrosine to tRNA(Tyr) in a two-step reaction: tyrosine is first activated by ATP to form Tyr-AMP and then transferred to the acceptor end of tRNA(Tyr). In Bacillus cereus (strain ATCC 14579 / DSM 31 / CCUG 7414 / JCM 2152 / NBRC 15305 / NCIMB 9373 / NCTC 2599 / NRRL B-3711), this protein is Tyrosine--tRNA ligase 1.